The primary structure comprises 239 residues: Transcription factor MYB10 (239 aa).

2 HTH myb-type domains span residues 11-63 (KSQV…INYL) and 64-118 (RPGL…KKRL). 2 DNA-binding regions (H-T-H motif) span residues 39–63 (WRSL…INYL) and 91–114 (WSKI…NTHL).

As to expression, expressed in cauline leaves and siliques.

The protein localises to the nucleus. Its function is as follows. Involved in metal ions homeostasis, including iron ions (Fe) acquisition, via the regulation of NAS4 and NAS2 genes expression. Necessary for plant survival in alkaline soil where iron availability is greatly restricted. Triggers tolerance to nickel (Ni) and zinc (Zn) ions. The chain is Transcription factor MYB10 from Arabidopsis thaliana (Mouse-ear cress).